Consider the following 91-residue polypeptide: Sec-independent protein translocase protein TatA (91 aa).

The helical transmembrane segment at 3-23 threads the bilayer; that stretch reads FFGIGLPEMLVILAIALLVFG. Residues 57–91 form a disordered region; that stretch reads DRTPATPAEATVEPPVLDSAPTEAVTVEKQTETQV. Over residues 59–72 the composition is skewed to low complexity; the sequence is TPATPAEATVEPPV.

The protein belongs to the TatA/E family. As to quaternary structure, forms a complex with TatC.

It is found in the cell inner membrane. Its function is as follows. Part of the twin-arginine translocation (Tat) system that transports large folded proteins containing a characteristic twin-arginine motif in their signal peptide across membranes. TatA could form the protein-conducting channel of the Tat system. This Synechococcus elongatus (strain ATCC 33912 / PCC 7942 / FACHB-805) (Anacystis nidulans R2) protein is Sec-independent protein translocase protein TatA.